Reading from the N-terminus, the 396-residue chain is Phosphoglycerate kinase (396 aa).

Substrate-binding positions include 21-23, arginine 37, 60-63, arginine 121, and arginine 154; these read DFN and HLGR. Residues lysine 205, glycine 296, glutamate 327, and 353 to 356 contribute to the ATP site; that span reads GGDS.

This sequence belongs to the phosphoglycerate kinase family. In terms of assembly, monomer.

The protein resides in the cytoplasm. The enzyme catalyses (2R)-3-phosphoglycerate + ATP = (2R)-3-phospho-glyceroyl phosphate + ADP. It participates in carbohydrate degradation; glycolysis; pyruvate from D-glyceraldehyde 3-phosphate: step 2/5. In Anaeromyxobacter sp. (strain Fw109-5), this protein is Phosphoglycerate kinase.